The chain runs to 274 residues: Nitrogenase iron protein (274 aa).

8 to 15 serves as a coordination point for ATP; it reads GKGGIGKS. A [4Fe-4S] cluster-binding site is contributed by Cys-94. Arg-97 carries the post-translational modification ADP-ribosylarginine; by dinitrogenase reductase ADP-ribosyltransferase. Cys-131 is a binding site for [4Fe-4S] cluster.

It belongs to the NifH/BchL/ChlL family. As to quaternary structure, homodimer. [4Fe-4S] cluster is required as a cofactor. In terms of processing, the reversible ADP-ribosylation of Arg-97 inactivates the nitrogenase reductase and regulates nitrogenase activity.

It carries out the reaction N2 + 8 reduced [2Fe-2S]-[ferredoxin] + 16 ATP + 16 H2O = H2 + 8 oxidized [2Fe-2S]-[ferredoxin] + 2 NH4(+) + 16 ADP + 16 phosphate + 6 H(+). In terms of biological role, the key enzymatic reactions in nitrogen fixation are catalyzed by the nitrogenase complex, which has 2 components: the iron protein and the molybdenum-iron protein. This chain is Nitrogenase iron protein, found in Desulfatibacillum aliphaticivorans.